A 178-amino-acid polypeptide reads, in one-letter code: Large ribosomal subunit protein uL6 (178 aa).

It belongs to the universal ribosomal protein uL6 family. As to quaternary structure, part of the 50S ribosomal subunit.

Its function is as follows. This protein binds to the 23S rRNA, and is important in its secondary structure. It is located near the subunit interface in the base of the L7/L12 stalk, and near the tRNA binding site of the peptidyltransferase center. This is Large ribosomal subunit protein uL6 from Campylobacter fetus subsp. fetus (strain 82-40).